A 229-amino-acid polypeptide reads, in one-letter code: Heptaprenylglyceryl phosphate synthase (229 aa).

Residue K12 participates in sn-glycerol 1-phosphate binding. The Mg(2+) site is built by D14 and S40. Residues Y159–G164, G189, and G209–N210 contribute to the sn-glycerol 1-phosphate site.

Belongs to the GGGP/HepGP synthase family. Group I subfamily. In terms of assembly, homodimer. Requires Mg(2+) as cofactor.

The enzyme catalyses sn-glycerol 1-phosphate + all-trans-heptaprenyl diphosphate = 3-heptaprenyl-sn-glycero-1-phosphate + diphosphate. Its pathway is membrane lipid metabolism; glycerophospholipid metabolism. In terms of biological role, prenyltransferase that catalyzes in vivo the transfer of the heptaprenyl moiety of heptaprenyl pyrophosphate (HepPP; 35 carbon atoms) to the C3 hydroxyl of sn-glycerol-1-phosphate (G1P), producing heptaprenylglyceryl phosphate (HepGP). This reaction is an ether-bond-formation step in the biosynthesis of archaea-type G1P-based membrane lipids found in Bacillales. This is Heptaprenylglyceryl phosphate synthase from Bacillus velezensis (strain DSM 23117 / BGSC 10A6 / LMG 26770 / FZB42) (Bacillus amyloliquefaciens subsp. plantarum).